The primary structure comprises 289 residues: Poly-beta-1,6-N-acetyl-D-glucosamine N-deacetylase (289 aa).

Positions 1–30 are cleaved as a signal peptide; the sequence is MKPFKLIFISALMILIMTNATPISHLNAQA. Positions 113–289 constitute a NodB homology domain; it reads RSVWINFDDM…KEWDGFDEEK (177 aa).

This sequence belongs to the polysaccharide deacetylase family.

It localises to the secreted. Its subcellular location is the cell wall. Its function is as follows. Catalyzes the N-deacetylation of poly-beta-1,6-N-acetyl-D-glucosamine (PNAG, also referred to as PIA), a biofilm adhesin polysaccharide. In fact, the IcaB deacetylase converts 15 to 20% of the GlcNAc residues of PNAG to glucosamine. N-deacetylation is crucial for attachment of the polysaccharide to the bacterial cell surface; it leads to the introduction of positive charges in the otherwise neutral PIA polymer, allowing electrostatic interactions. Deacetylation of the polymer is also essential for key virulence mechanisms of S.epidermidis, namely biofilm formation, colonization, and resistance to neutrophil phagocytosis and human antibacterial peptides. This is Poly-beta-1,6-N-acetyl-D-glucosamine N-deacetylase (icaB) from Staphylococcus epidermidis (strain ATCC 35984 / DSM 28319 / BCRC 17069 / CCUG 31568 / BM 3577 / RP62A).